We begin with the raw amino-acid sequence, 512 residues long: Inositol-3-phosphate synthase (512 aa).

Residues glycine 72, glycine 73, asparagine 74, asparagine 75, aspartate 145, isoleucine 182, glutamine 192, arginine 195, threonine 232, glycine 233, asparagine 234, threonine 235, glycine 283, serine 284, aspartate 308, serine 311, asparagine 342, asparagine 343, aspartate 344, lysine 357, glycine 395, aspartate 396, aspartate 424, and serine 425 each coordinate NAD(+).

The protein belongs to the myo-inositol 1-phosphate synthase family. The cofactor is NAD(+).

The protein localises to the cytoplasm. It is found in the cytosol. The protein resides in the nucleus. It catalyses the reaction D-glucose 6-phosphate = 1D-myo-inositol 3-phosphate. The protein operates within polyol metabolism; myo-inositol biosynthesis; myo-inositol from D-glucose 6-phosphate: step 1/2. In terms of biological role, key enzyme in myo-inositol biosynthesis pathway that catalyzes the conversion of glucose 6-phosphate to 1-myo-inositol 1-phosphate in a NAD-dependent manner. This chain is Inositol-3-phosphate synthase, found in Mesembryanthemum crystallinum (Common ice plant).